A 173-amino-acid polypeptide reads, in one-letter code: MGRTRENKATVISDVQELFQDAQMTVIIDYQGLTVAEITDLRNRLRPLGGTCKIAKNTLVRRALAGQEAWSPMEEFLTGTTAILVLKEDLGGAIKAYKKFQKDTKKTELRGGVLEGKSLTQADVEAIGDLPSKEQLMGQIAGGINALATKIALGIKEVPASVARGLQAHVDKE.

Belongs to the universal ribosomal protein uL10 family. In terms of assembly, part of the ribosomal stalk of the 50S ribosomal subunit. The N-terminus interacts with L11 and the large rRNA to form the base of the stalk. The C-terminus forms an elongated spine to which L12 dimers bind in a sequential fashion forming a multimeric L10(L12)X complex.

Functionally, forms part of the ribosomal stalk, playing a central role in the interaction of the ribosome with GTP-bound translation factors. This Synechocystis sp. (strain ATCC 27184 / PCC 6803 / Kazusa) protein is Large ribosomal subunit protein uL10 (rplJ).